The sequence spans 300 residues: Ribosomal RNA small subunit methyltransferase H (300 aa).

S-adenosyl-L-methionine contacts are provided by residues 46 to 48 (GGH), Asp-65, Phe-92, Asp-107, and Gln-114.

The protein belongs to the methyltransferase superfamily. RsmH family.

Its subcellular location is the cytoplasm. It catalyses the reaction cytidine(1402) in 16S rRNA + S-adenosyl-L-methionine = N(4)-methylcytidine(1402) in 16S rRNA + S-adenosyl-L-homocysteine + H(+). Its function is as follows. Specifically methylates the N4 position of cytidine in position 1402 (C1402) of 16S rRNA. This Prochlorococcus marinus (strain MIT 9215) protein is Ribosomal RNA small subunit methyltransferase H.